Here is a 201-residue protein sequence, read N- to C-terminus: Small ribosomal subunit protein uS4c (201 aa).

An S4 RNA-binding domain is found at 89-149; sequence MRLDNILFRL…DEQKSRALIQ (61 aa).

This sequence belongs to the universal ribosomal protein uS4 family. Part of the 30S ribosomal subunit. Contacts protein S5. The interaction surface between S4 and S5 is involved in control of translational fidelity.

Its subcellular location is the plastid. It is found in the chloroplast. Its function is as follows. One of the primary rRNA binding proteins, it binds directly to 16S rRNA where it nucleates assembly of the body of the 30S subunit. With S5 and S12 plays an important role in translational accuracy. The sequence is that of Small ribosomal subunit protein uS4c (rps4) from Coffea arabica (Arabian coffee).